The following is a 267-amino-acid chain: Ribosomal RNA small subunit methyltransferase A (267 aa).

His13, Leu15, Gly40, Glu61, Asp85, and Asn105 together coordinate S-adenosyl-L-methionine.

Belongs to the class I-like SAM-binding methyltransferase superfamily. rRNA adenine N(6)-methyltransferase family. RsmA subfamily.

It is found in the cytoplasm. It catalyses the reaction adenosine(1518)/adenosine(1519) in 16S rRNA + 4 S-adenosyl-L-methionine = N(6)-dimethyladenosine(1518)/N(6)-dimethyladenosine(1519) in 16S rRNA + 4 S-adenosyl-L-homocysteine + 4 H(+). In terms of biological role, specifically dimethylates two adjacent adenosines (A1518 and A1519) in the loop of a conserved hairpin near the 3'-end of 16S rRNA in the 30S particle. May play a critical role in biogenesis of 30S subunits. The protein is Ribosomal RNA small subunit methyltransferase A of Bacteroides thetaiotaomicron (strain ATCC 29148 / DSM 2079 / JCM 5827 / CCUG 10774 / NCTC 10582 / VPI-5482 / E50).